The chain runs to 473 residues: MSTNEGSLWGGRFAGGPAPALAALSKSTHFDWALAPYDIQASVAHARVLRKAGLLTDEQLGALVEGLEQLGRDVASGVFVPADTDEDVHGALERGLIERVGPDIGGRLRAGRSRNDQVATLFRMWLRDAAGRISEGVLDVVQALADQAGAHPDAIMPGKTHLQAAQPVLLAHHLLAHAQPLLRDVDRLVDWDRRTAVSPYGAGALAGSSLGLDPDAIALDLGFTAAADNSIDATSSRDFAAEAGFVFAMIGIDLSRLSEDIILWGTTEFGYVTLDDSWSTGSSIMPQKKNPDIAELARGKTGRLIGNLTGLLATLKAQPLAYNRDLQEDKEPLFDSVSQLELLLPAMAGLVATLRFHTERMAQLAPAGFTLATDLAEWMVRQGIPFRVAHEAAGEAVRVAEARGVGLEDLTDEEFAAIHPELTGDVRAVLTTAGSVASRDARGGTAPERVAEQRELVLARLNVLRGQNGRHPG.

The protein belongs to the lyase 1 family. Argininosuccinate lyase subfamily.

It is found in the cytoplasm. It carries out the reaction 2-(N(omega)-L-arginino)succinate = fumarate + L-arginine. The protein operates within amino-acid biosynthesis; L-arginine biosynthesis; L-arginine from L-ornithine and carbamoyl phosphate: step 3/3. The chain is Argininosuccinate lyase from Mycobacteroides abscessus (strain ATCC 19977 / DSM 44196 / CCUG 20993 / CIP 104536 / JCM 13569 / NCTC 13031 / TMC 1543 / L948) (Mycobacterium abscessus).